The primary structure comprises 95 residues: Nucleoid-associated protein MMOB0740 (95 aa).

The protein belongs to the YbaB/EbfC family. As to quaternary structure, homodimer.

The protein resides in the cytoplasm. The protein localises to the nucleoid. Functionally, binds to DNA and alters its conformation. May be involved in regulation of gene expression, nucleoid organization and DNA protection. This is Nucleoid-associated protein MMOB0740 from Mycoplasma mobile (strain ATCC 43663 / 163K / NCTC 11711) (Mesomycoplasma mobile).